We begin with the raw amino-acid sequence, 267 residues long: tRNA-cytidine(32) 2-sulfurtransferase 1 (267 aa).

The PP-loop motif signature appears at S42–S47. C117, C120, and C208 together coordinate [4Fe-4S] cluster.

This sequence belongs to the TtcA family. Homodimer. Mg(2+) serves as cofactor. [4Fe-4S] cluster is required as a cofactor.

The protein resides in the cytoplasm. It catalyses the reaction cytidine(32) in tRNA + S-sulfanyl-L-cysteinyl-[cysteine desulfurase] + AH2 + ATP = 2-thiocytidine(32) in tRNA + L-cysteinyl-[cysteine desulfurase] + A + AMP + diphosphate + H(+). It functions in the pathway tRNA modification. Its function is as follows. Catalyzes the ATP-dependent 2-thiolation of cytidine in position 32 of tRNA, to form 2-thiocytidine (s(2)C32). The sulfur atoms are provided by the cysteine/cysteine desulfurase (IscS) system. This Francisella tularensis subsp. tularensis (strain FSC 198) protein is tRNA-cytidine(32) 2-sulfurtransferase 1.